A 559-amino-acid chain; its full sequence is NAD-dependent malic enzyme 2 (559 aa).

Catalysis depends on Tyr-98, which acts as the Proton donor. Arg-151 provides a ligand contact to NAD(+). The active-site Proton acceptor is the Lys-169. Residues Glu-240, Asp-241, and Asp-264 each coordinate a divalent metal cation. Residues Asp-264 and Asn-413 each contribute to the NAD(+) site.

The protein belongs to the malic enzymes family. As to quaternary structure, homotetramer. It depends on Mg(2+) as a cofactor. Mn(2+) serves as cofactor.

The catalysed reaction is (S)-malate + NAD(+) = pyruvate + CO2 + NADH. The enzyme catalyses oxaloacetate + H(+) = pyruvate + CO2. This chain is NAD-dependent malic enzyme 2, found in Vibrio vulnificus (strain YJ016).